A 402-amino-acid chain; its full sequence is Potassium channel subfamily K member 9 (402 aa).

At 1 to 8 (MKRQNVRT) the chain is on the cytoplasmic side. A helical membrane pass occupies residues 9–29 (LSLIACTFTYLLVGAAVFDAL). The Extracellular segment spans residues 30–88 (ESDHEMREEEKLKAEEVRLRGKYNISSDDYQQLELVILQSEPHRAGVQWKFAGSFYFAI). Asparagine 53 carries N-linked (GlcNAc...) asparagine glycosylation. Positions 89–101 (TVITTIGYGHAAP) form an intramembrane region, pore-forming. Residues threonine 93, isoleucine 94, glycine 95, and tyrosine 96 each coordinate K(+). The tract at residues 93–98 (TIGYGH) is selectivity filter 1. Over 102-107 (GTDAGK) the chain is Extracellular. A helical transmembrane segment spans residues 108–128 (AFCMFYAVLGIPLTLVMFQSL). The Cytoplasmic segment spans residues 129 to 158 (GERMNTFVRYLLKRIKKCCGMRNTEVSMEN). The chain crosses the membrane as a helical span at residues 159–179 (MVTVGFFSCMGTLCLGAAAFS). Residues 180-194 (QCEDWSFFHAYYYCF) lie on the Extracellular side of the membrane. Residues 195–207 (ITLTTIGFGDFVA) constitute an intramembrane region (pore-forming). K(+) is bound by residues threonine 199, isoleucine 200, glycine 201, and phenylalanine 202. The tract at residues 199 to 204 (TIGFGD) is selectivity filter 2. Residues 208 to 218 (LQAKGALQRKP) are Extracellular-facing. Residues 219-239 (FYVAFSFMYILVGLTVIGAFL) form a helical membrane-spanning segment. Over 240-402 (NLVVLRFLTM…HRLHLRRKSI (163 aa)) the chain is Cytoplasmic. The X-gate stretch occupies residues 243–248 (VLRFLT).

The protein belongs to the two pore domain potassium channel (TC 1.A.1.8) family. In terms of assembly, homodimer. Heterodimer with KCNK1. Heterodimer with KCNK3. In terms of tissue distribution, expressed in adrenal glands mainly in outer zona glomerulosa and inner zona medullaris. Expressed in retinal ganglion cells. Expressed in dentate gyrus (at protein level).

It localises to the cell membrane. It is found in the mitochondrion inner membrane. The protein resides in the cell projection. The protein localises to the dendrite. The catalysed reaction is K(+)(in) = K(+)(out). It carries out the reaction Na(+)(in) = Na(+)(out). Its activity is regulated as follows. Inhibited by NTS:NTSR1 signaling in dentate gyrus granule cells. Its function is as follows. K(+) channel that conducts voltage-dependent outward rectifying currents upon membrane depolarization. Voltage sensing is coupled to K(+) electrochemical gradient in an 'ion flux gating' mode where outward but not inward ion flow opens the gate. Changes ion selectivity and becomes permeable to Na(+) ions in response to extracellular acidification. Protonation of the pH sensor His-98 stabilizes C-type inactivation conformation likely converting the channel from outward K(+)-conducting, to inward Na(+)-conducting to nonconductive state. Homo- and heterodimerizes to form functional channels with distinct regulatory and gating properties. Allows K(+) currents with fast-gating kinetics important for the repolarization and hyperpolarization phases of action potentials. In granule neurons, hyperpolarizes the resting membrane potential to limit intrinsic neuronal excitability, but once the action potential threshold is reached, supports high-frequency action potential firing and increased neuronal excitability. Homomeric and/or heteromeric KCNK3:KCNK9 channels operate in cerebellar granule cells, whereas heteromeric KCNK1:KCNK9 enables currents in hippocampal dentate gyrus granule neurons. Dispensable for central chemosensory respiration i.e. breathing controlled by brainstem CO2/pH, it rather conducts pH-sensitive currents and controls the firing rate of serotonergic raphe neurons involved in potentiation of the respiratory chemoreflex. In retinal ganglion cells, mediates outward rectifying currents that regulate action potentials in response to acidification of the synaptic cleft. Involved in transmission of image-forming and nonimage-forming visual information in the retina. In adrenal gland, contributes to the maintenance of a hyperpolarized resting membrane potential of aldosterone-producing cells at zona glomerulosa and limits aldosterone release as part of a regulatory mechanism that controls arterial blood pressure and electrolyte homeostasis. The polypeptide is Potassium channel subfamily K member 9 (Mus musculus (Mouse)).